The primary structure comprises 1064 residues: Carbamoyl phosphate synthase large chain (1064 aa).

The carboxyphosphate synthetic domain stretch occupies residues 1–401; the sequence is MPKRNDIKKI…SLLKAVRSLE (401 aa). Arg129, Arg169, Gly175, Gly176, Glu208, Ile210, Glu215, Gly241, Val242, His243, Gln284, and Glu298 together coordinate ATP. In terms of domain architecture, ATP-grasp 1 spans 133–327; it reads KELCESINEP…IAKMSAKIAI (195 aa). 3 residues coordinate Mg(2+): Gln284, Glu298, and Asn300. Gln284, Glu298, and Asn300 together coordinate Mn(2+). The tract at residues 402–546 is oligomerization domain; sequence IGVFHNEMTE…YSTYEWENES (145 aa). The segment at 547–929 is carbamoyl phosphate synthetic domain; the sequence is KRSDKEKIIV…ALYKSFEAAK (383 aa). An ATP-grasp 2 domain is found at 671–861; sequence EKALQDLDIP…MAQLATQMIL (191 aa). Arg707, Ser746, Leu748, Glu752, Gly777, Val778, His779, Ser780, Gln820, and Glu832 together coordinate ATP. Mg(2+) is bound by residues Gln820, Glu832, and Asn834. Gln820, Glu832, and Asn834 together coordinate Mn(2+). An MGS-like domain is found at 930–1064; the sequence is LHMADYGSVL…QSRSFTTKNI (135 aa). The allosteric domain stretch occupies residues 930-1064; the sequence is LHMADYGSVL…QSRSFTTKNI (135 aa).

Belongs to the CarB family. Composed of two chains; the small (or glutamine) chain promotes the hydrolysis of glutamine to ammonia, which is used by the large (or ammonia) chain to synthesize carbamoyl phosphate. Tetramer of heterodimers (alpha,beta)4. It depends on Mg(2+) as a cofactor. The cofactor is Mn(2+).

It carries out the reaction hydrogencarbonate + L-glutamine + 2 ATP + H2O = carbamoyl phosphate + L-glutamate + 2 ADP + phosphate + 2 H(+). The enzyme catalyses hydrogencarbonate + NH4(+) + 2 ATP = carbamoyl phosphate + 2 ADP + phosphate + 2 H(+). Its pathway is amino-acid biosynthesis; L-arginine biosynthesis; carbamoyl phosphate from bicarbonate: step 1/1. It participates in pyrimidine metabolism; UMP biosynthesis via de novo pathway; (S)-dihydroorotate from bicarbonate: step 1/3. Large subunit of the glutamine-dependent carbamoyl phosphate synthetase (CPSase). CPSase catalyzes the formation of carbamoyl phosphate from the ammonia moiety of glutamine, carbonate, and phosphate donated by ATP, constituting the first step of 2 biosynthetic pathways, one leading to arginine and/or urea and the other to pyrimidine nucleotides. The large subunit (synthetase) binds the substrates ammonia (free or transferred from glutamine from the small subunit), hydrogencarbonate and ATP and carries out an ATP-coupled ligase reaction, activating hydrogencarbonate by forming carboxy phosphate which reacts with ammonia to form carbamoyl phosphate. The chain is Carbamoyl phosphate synthase large chain from Lactococcus lactis subsp. cremoris (strain MG1363).